Reading from the N-terminus, the 359-residue chain is NF-kappa-B inhibitor beta (359 aa).

A phosphoserine; by RPS6KA1 mark is found at S19 and S23. 6 ANK repeats span residues 57 to 86 (DGDT…GTEY), 93 to 122 (LGQT…GVLV), 126 to 155 (GGHT…SHPR), 206 to 235 (DGHT…DLNK), 240 to 269 (CGRT…DPTA), and 273 to 302 (GGRT…PEPE). The segment at 153-192 (HPRDASDTYLTQSQDHTPDTSHAPVATDPQPNPGNEEELR) is disordered. The span at 298 to 308 (APEPEDKDDKL) shows a compositional bias: basic and acidic residues. The tract at residues 298 to 359 (APEPEDKDDK…KPLPDDPNPA (62 aa)) is disordered. Phosphoserine is present on S318. The segment covering 318–331 (SDSDNRDEGDEYDD) has biased composition (acidic residues). A compositionally biased stretch (pro residues) spans 342–359 (QPPPSPAAKPLPDDPNPA).

Belongs to the NF-kappa-B inhibitor family. In terms of assembly, interacts with THRB (via ligand-binding domain). Interacts with RELA and REL. Interacts with COMMD1. Interacts with inhibitor kappa B-interacting Ras-like NKIRAS1 and NKIRAS2. In terms of processing, phosphorylated by RPS6KA1; followed by degradation. Interaction with NKIRAS1 and NKIRAS2 probably prevents phosphorylation.

It is found in the cytoplasm. The protein localises to the nucleus. In terms of biological role, inhibits NF-kappa-B by complexing with and trapping it in the cytoplasm. However, the unphosphorylated form resynthesized after cell stimulation is able to bind NF-kappa-B allowing its transport to the nucleus and protecting it to further NFKBIA-dependent inactivation. Association with inhibitor kappa B-interacting NKIRAS1 and NKIRAS2 prevent its phosphorylation rendering it more resistant to degradation, explaining its slower degradation. This chain is NF-kappa-B inhibitor beta (Nfkbib), found in Rattus norvegicus (Rat).